Reading from the N-terminus, the 59-residue chain is Large ribosomal subunit protein bL32 (59 aa).

A compositionally biased stretch (basic residues) spans 1-16 (MAVPKRKTSPSKRGMR). Residues 1-20 (MAVPKRKTSPSKRGMRRSHD) form a disordered region.

It belongs to the bacterial ribosomal protein bL32 family.

This Sphingopyxis alaskensis (strain DSM 13593 / LMG 18877 / RB2256) (Sphingomonas alaskensis) protein is Large ribosomal subunit protein bL32.